A 220-amino-acid polypeptide reads, in one-letter code: Putative GED domain-containing protein DNM1P46 (220 aa).

A disordered region spans residues 18–46 (VSVETRNVKPQGKDSKAEENGSHSFMHSM). Positions 28–38 (QGKDSKAEENG) are enriched in basic and acidic residues. One can recognise a GED domain in the interval 54–149 (METTQNLVDS…CCPTCTRLGT (96 aa)). Residues 173–194 (DTPGGVGRAGTAARRDSRGNEK) are disordered. Residues 185–194 (ARRDSRGNEK) show a composition bias toward basic and acidic residues.

In Homo sapiens (Human), this protein is Putative GED domain-containing protein DNM1P46 (DNM1P46).